A 238-amino-acid chain; its full sequence is 1-(5-phosphoribosyl)-5-[(5-phosphoribosylamino)methylideneamino] imidazole-4-carboxamide isomerase (238 aa).

D8 functions as the Proton acceptor in the catalytic mechanism. The active-site Proton donor is D129.

The protein belongs to the HisA/HisF family.

Its subcellular location is the cytoplasm. It catalyses the reaction 1-(5-phospho-beta-D-ribosyl)-5-[(5-phospho-beta-D-ribosylamino)methylideneamino]imidazole-4-carboxamide = 5-[(5-phospho-1-deoxy-D-ribulos-1-ylimino)methylamino]-1-(5-phospho-beta-D-ribosyl)imidazole-4-carboxamide. It participates in amino-acid biosynthesis; L-histidine biosynthesis; L-histidine from 5-phospho-alpha-D-ribose 1-diphosphate: step 4/9. In Myxococcus xanthus (strain DK1622), this protein is 1-(5-phosphoribosyl)-5-[(5-phosphoribosylamino)methylideneamino] imidazole-4-carboxamide isomerase.